A 623-amino-acid chain; its full sequence is tRNA uridine 5-carboxymethylaminomethyl modification enzyme MnmG (623 aa).

12 to 17 (GAGHAG) is a binding site for FAD. Residue 272-286 (GPRYCPSIEDKINRF) participates in NAD(+) binding.

It belongs to the MnmG family. As to quaternary structure, homodimer. Heterotetramer of two MnmE and two MnmG subunits. It depends on FAD as a cofactor.

Its subcellular location is the cytoplasm. In terms of biological role, NAD-binding protein involved in the addition of a carboxymethylaminomethyl (cmnm) group at the wobble position (U34) of certain tRNAs, forming tRNA-cmnm(5)s(2)U34. This Flavobacterium johnsoniae (strain ATCC 17061 / DSM 2064 / JCM 8514 / BCRC 14874 / CCUG 350202 / NBRC 14942 / NCIMB 11054 / UW101) (Cytophaga johnsonae) protein is tRNA uridine 5-carboxymethylaminomethyl modification enzyme MnmG.